A 101-amino-acid chain; its full sequence is Small ribosomal subunit protein bS18c (101 aa).

Basic residues predominate over residues 1-19 (MDKSKRPFRKSKRSFRRRL). The interval 1-23 (MDKSKRPFRKSKRSFRRRLPPIG) is disordered.

This sequence belongs to the bacterial ribosomal protein bS18 family. As to quaternary structure, part of the 30S ribosomal subunit.

It localises to the plastid. It is found in the chloroplast. This is Small ribosomal subunit protein bS18c from Ceratophyllum demersum (Rigid hornwort).